The following is a 323-amino-acid chain: Malate dehydrogenase (323 aa).

Gly-11–Ala-17 provides a ligand contact to NAD(+). Substrate is bound by residues Arg-92 and Arg-98. Residues Asn-105, Gln-112, and Val-129–Asn-131 each bind NAD(+). 2 residues coordinate substrate: Asn-131 and Arg-162. Catalysis depends on His-187, which acts as the Proton acceptor.

Belongs to the LDH/MDH superfamily. MDH type 2 family.

The enzyme catalyses (S)-malate + NAD(+) = oxaloacetate + NADH + H(+). Functionally, catalyzes the reversible oxidation of malate to oxaloacetate. In Corynebacterium efficiens (strain DSM 44549 / YS-314 / AJ 12310 / JCM 11189 / NBRC 100395), this protein is Malate dehydrogenase.